Reading from the N-terminus, the 369-residue chain is Coiled-coil domain-containing protein 130 homolog (369 aa).

Positions 233–263 (TRYRDTKTHDDHLESSRDRIESRRIFRRPEE) are enriched in basic and acidic residues. The disordered stretch occupies residues 233–369 (TRYRDTKTHD…EYGNSSDDSD (137 aa)). Residues 266–282 (TPSTSSGSSGGAVPSAS) show a composition bias toward low complexity. Positions 283 to 297 (ERLKATMKAERDKRI) are enriched in basic and acidic residues. Low complexity predominate over residues 299–310 (ASFSTAGTSSAT).

This sequence belongs to the CWC16 family.

The protein is Coiled-coil domain-containing protein 130 homolog of Caenorhabditis elegans.